The chain runs to 152 residues: Nucleoside diphosphate kinase (152 aa).

Positions 11, 59, 87, 93, 104, and 114 each coordinate ATP. Residue His117 is the Pros-phosphohistidine intermediate of the active site.

This sequence belongs to the NDK family. In terms of assembly, homotetramer. Requires Mg(2+) as cofactor.

The protein resides in the cytoplasm. It catalyses the reaction dZDP + ATP = dZTP + ADP. The catalysed reaction is a 2'-deoxyribonucleoside 5'-diphosphate + ATP = a 2'-deoxyribonucleoside 5'-triphosphate + ADP. The enzyme catalyses a ribonucleoside 5'-diphosphate + ATP = a ribonucleoside 5'-triphosphate + ADP. Its pathway is purine metabolism. Its function is as follows. Major role in the synthesis of nucleoside triphosphates other than ATP. The ATP gamma phosphate is transferred to the NDP beta phosphate via a ping-pong mechanism, using a phosphorylated active-site intermediate. (Microbial infection) Catalyzes the phosphorylation of dZDP to dZTP, when the bacterium is infected by a phage that produces the substrate for the synthesis of dZTP (2- amino-2'-deoxyadenosine 5'-triphosphate), which is then used by the phage as a DNA polymerase substrate. The protein is Nucleoside diphosphate kinase of Synechococcus sp. (strain CC9311).